A 434-amino-acid chain; its full sequence is D-amino acid dehydrogenase (434 aa).

Residue 3 to 17 (VVILGSGVVGVASAW) coordinates FAD.

This sequence belongs to the DadA oxidoreductase family. It depends on FAD as a cofactor.

The enzyme catalyses a D-alpha-amino acid + A + H2O = a 2-oxocarboxylate + AH2 + NH4(+). Its pathway is amino-acid degradation; D-alanine degradation; NH(3) and pyruvate from D-alanine: step 1/1. Oxidative deamination of D-amino acids. This Yersinia enterocolitica serotype O:8 / biotype 1B (strain NCTC 13174 / 8081) protein is D-amino acid dehydrogenase.